The chain runs to 271 residues: Tryptophan synthase alpha chain (271 aa).

Residues E49 and D60 each act as proton acceptor in the active site.

It belongs to the TrpA family. As to quaternary structure, tetramer of two alpha and two beta chains.

The enzyme catalyses (1S,2R)-1-C-(indol-3-yl)glycerol 3-phosphate + L-serine = D-glyceraldehyde 3-phosphate + L-tryptophan + H2O. It functions in the pathway amino-acid biosynthesis; L-tryptophan biosynthesis; L-tryptophan from chorismate: step 5/5. Functionally, the alpha subunit is responsible for the aldol cleavage of indoleglycerol phosphate to indole and glyceraldehyde 3-phosphate. The sequence is that of Tryptophan synthase alpha chain from Burkholderia cenocepacia (strain HI2424).